A 297-amino-acid polypeptide reads, in one-letter code: 4-hydroxy-tetrahydrodipicolinate synthase (297 aa).

Threonine 46 lines the pyruvate pocket. Tyrosine 134 functions as the Proton donor/acceptor in the catalytic mechanism. Lysine 162 acts as the Schiff-base intermediate with substrate in catalysis. Isoleucine 209 provides a ligand contact to pyruvate.

This sequence belongs to the DapA family. Homotetramer; dimer of dimers.

It is found in the cytoplasm. It catalyses the reaction L-aspartate 4-semialdehyde + pyruvate = (2S,4S)-4-hydroxy-2,3,4,5-tetrahydrodipicolinate + H2O + H(+). It participates in amino-acid biosynthesis; L-lysine biosynthesis via DAP pathway; (S)-tetrahydrodipicolinate from L-aspartate: step 3/4. Functionally, catalyzes the condensation of (S)-aspartate-beta-semialdehyde [(S)-ASA] and pyruvate to 4-hydroxy-tetrahydrodipicolinate (HTPA). This Methanosphaera stadtmanae (strain ATCC 43021 / DSM 3091 / JCM 11832 / MCB-3) protein is 4-hydroxy-tetrahydrodipicolinate synthase.